The sequence spans 606 residues: 4-hydroxy-3-methylbut-2-en-1-yl diphosphate synthase (flavodoxin) (606 aa).

Cys513, Cys516, Cys547, and Glu554 together coordinate [4Fe-4S] cluster.

This sequence belongs to the IspG family. The cofactor is [4Fe-4S] cluster.

The catalysed reaction is (2E)-4-hydroxy-3-methylbut-2-enyl diphosphate + oxidized [flavodoxin] + H2O + 2 H(+) = 2-C-methyl-D-erythritol 2,4-cyclic diphosphate + reduced [flavodoxin]. The protein operates within isoprenoid biosynthesis; isopentenyl diphosphate biosynthesis via DXP pathway; isopentenyl diphosphate from 1-deoxy-D-xylulose 5-phosphate: step 5/6. In terms of biological role, converts 2C-methyl-D-erythritol 2,4-cyclodiphosphate (ME-2,4cPP) into 1-hydroxy-2-methyl-2-(E)-butenyl 4-diphosphate. This Chlamydia caviae (strain ATCC VR-813 / DSM 19441 / 03DC25 / GPIC) (Chlamydophila caviae) protein is 4-hydroxy-3-methylbut-2-en-1-yl diphosphate synthase (flavodoxin).